The primary structure comprises 281 residues: Pantothenate synthetase (281 aa).

26 to 33 contributes to the ATP binding site; sequence MGNLHDGH. Catalysis depends on His33, which acts as the Proton donor. A (R)-pantoate-binding site is contributed by Gln57. Residue Gln57 participates in beta-alanine binding. 145-148 contributes to the ATP binding site; the sequence is GEKD. Gln151 serves as a coordination point for (R)-pantoate. 182-185 contributes to the ATP binding site; sequence MSSR.

This sequence belongs to the pantothenate synthetase family. As to quaternary structure, homodimer.

The protein localises to the cytoplasm. It catalyses the reaction (R)-pantoate + beta-alanine + ATP = (R)-pantothenate + AMP + diphosphate + H(+). It participates in cofactor biosynthesis; (R)-pantothenate biosynthesis; (R)-pantothenate from (R)-pantoate and beta-alanine: step 1/1. Catalyzes the condensation of pantoate with beta-alanine in an ATP-dependent reaction via a pantoyl-adenylate intermediate. The chain is Pantothenate synthetase from Idiomarina loihiensis (strain ATCC BAA-735 / DSM 15497 / L2-TR).